A 282-amino-acid chain; its full sequence is Rhomboid protease GlpG (282 aa).

A run of 6 helical transmembrane segments spans residues 96-116 (AGPLTLTILLLNIVVYLWMQF), 144-164 (GLLHFSLLHIIFNLMWWWYLG), 176-196 (LFVIMIVSAVFSGWGQSLFSG), 197-217 (SHFGGLSGVVYALIGYVWLTG), 225-242 (IGVPRGLMAFSLFWLIVG), and 247-269 (FGLSIANAAHFSGLIIGLLMALW). Residue Ser-203 is the Nucleophile of the active site. The active site involves His-256.

It belongs to the peptidase S54 family.

The protein resides in the cell inner membrane. It carries out the reaction Cleaves type-1 transmembrane domains using a catalytic dyad composed of serine and histidine that are contributed by different transmembrane domains.. In terms of biological role, rhomboid-type serine protease that catalyzes intramembrane proteolysis. This is Rhomboid protease GlpG from Photorhabdus laumondii subsp. laumondii (strain DSM 15139 / CIP 105565 / TT01) (Photorhabdus luminescens subsp. laumondii).